A 477-amino-acid polypeptide reads, in one-letter code: UDP-N-acetylmuramate--L-alanine ligase (477 aa).

Residue 112–118 participates in ATP binding; that stretch reads GAHGKTT.

This sequence belongs to the MurCDEF family.

Its subcellular location is the cytoplasm. It catalyses the reaction UDP-N-acetyl-alpha-D-muramate + L-alanine + ATP = UDP-N-acetyl-alpha-D-muramoyl-L-alanine + ADP + phosphate + H(+). Its pathway is cell wall biogenesis; peptidoglycan biosynthesis. Functionally, cell wall formation. The polypeptide is UDP-N-acetylmuramate--L-alanine ligase (Acidovorax ebreus (strain TPSY) (Diaphorobacter sp. (strain TPSY))).